Reading from the N-terminus, the 179-residue chain is tRNA (cytidine(56)-2'-O)-methyltransferase (179 aa).

Residues Leu-82, 112 to 116 (GAEKV), and 130 to 137 (VGNQPHSE) each bind S-adenosyl-L-methionine.

Belongs to the aTrm56 family. Homodimer.

It is found in the cytoplasm. The enzyme catalyses cytidine(56) in tRNA + S-adenosyl-L-methionine = 2'-O-methylcytidine(56) in tRNA + S-adenosyl-L-homocysteine + H(+). In terms of biological role, specifically catalyzes the AdoMet-dependent 2'-O-ribose methylation of cytidine at position 56 in tRNAs. The protein is tRNA (cytidine(56)-2'-O)-methyltransferase of Methanococcus maripaludis (strain C6 / ATCC BAA-1332).